Reading from the N-terminus, the 729-residue chain is DNA topoisomerase 3 (729 aa).

Residues 3-136 (KSVVIAEKPS…IKRLWISSVT (134 aa)) form the Toprim domain. Mg(2+) is bound by residues Glu9 and Asp105. The Topo IA-type catalytic domain occupies 153–594 (YDNLYASAVA…EMKNYTKEIV (442 aa)). The tract at residues 187-192 (NCGRVQ) is interaction with DNA. The active-site O-(5'-phospho-DNA)-tyrosine intermediate is the Tyr310. Residues 686 to 713 (ERRKKESGNKADKRDVQKYMKQQKKEEE) are compositionally biased toward basic and acidic residues. The disordered stretch occupies residues 686–718 (ERRKKESGNKADKRDVQKYMKQQKKEEEPLNNP).

The protein belongs to the type IA topoisomerase family. It depends on Mg(2+) as a cofactor.

The enzyme catalyses ATP-independent breakage of single-stranded DNA, followed by passage and rejoining.. Functionally, releases the supercoiling and torsional tension of DNA, which is introduced during the DNA replication and transcription, by transiently cleaving and rejoining one strand of the DNA duplex. Introduces a single-strand break via transesterification at a target site in duplex DNA. The scissile phosphodiester is attacked by the catalytic tyrosine of the enzyme, resulting in the formation of a DNA-(5'-phosphotyrosyl)-enzyme intermediate and the expulsion of a 3'-OH DNA strand. The free DNA strand then undergoes passage around the unbroken strand, thus removing DNA supercoils. Finally, in the religation step, the DNA 3'-OH attacks the covalent intermediate to expel the active-site tyrosine and restore the DNA phosphodiester backbone. This chain is DNA topoisomerase 3, found in Bacillus cereus (strain ZK / E33L).